A 211-amino-acid chain; its full sequence is LexA repressor (211 aa).

The segment at residues 35-55 (RAEIANFFGFKSANAAEEHLK) is a DNA-binding region (H-T-H motif). Catalysis depends on for autocatalytic cleavage activity residues Ser128 and Lys165.

The protein belongs to the peptidase S24 family. Homodimer.

The enzyme catalyses Hydrolysis of Ala-|-Gly bond in repressor LexA.. In terms of biological role, represses a number of genes involved in the response to DNA damage (SOS response), including recA and lexA. In the presence of single-stranded DNA, RecA interacts with LexA causing an autocatalytic cleavage which disrupts the DNA-binding part of LexA, leading to derepression of the SOS regulon and eventually DNA repair. The polypeptide is LexA repressor (Colwellia psychrerythraea (strain 34H / ATCC BAA-681) (Vibrio psychroerythus)).